A 1114-amino-acid chain; its full sequence is MISTTISGKRPIEQVDDELLSLTAQQENEEQQQQRKRRRHQFAPMTQFNSNTLDEDSGFRSSSDVATADQDNFLEESPSGYIKKVILRNFMCHEHFELELGSRLNFIVGNNGSGKSAILTAITIGLGAKASETNRGSSLKDLIREGCYSAKIILHLDNSKYGAYQQGIFGNEIIVERIIKRDGPASFSLRSENGKEISNKKKDIQTVVDYFSVPVSNPMCFLSQDAARSFLTASTSQDKYSHFMKGTLLQEITENLLYASAIHDSAQENMALHLENLKSLKAEYEDAKKLLRELNQTSDLNERKMLLQAKSLWIDVAHNTDACKNLENEISGIQQKVDEVTEKIRNRQEKIERYTSDGTTIEAQIDAKVIYVNEKDSEHQNARELLRDVKSRFEKEKSNQAEAQSNIDQGRKKVDALNKTIAHLEEELTKEMGGDKDQMRQELEQLEKANEKLREVNNSLVVSLQDVKNEERDIQHERESELRTISRSIQNKKVELQNIAKGNDTFLMNFDRNMDRLLRTIEQRKNEFETPAIGPLGSLVTIRKGFEKWTRSIQRAISSSLNAFVVSNPKDNRLFRDIMRSCGIRSNIPIVTYCLSQFDYSKGRAHGNYPTIVDALEFSKPEIECLFVDLSRIERIVLIEDKNEARNFLQRNPVNVNMALSLRDRRSGFQLSGGYRLDTVTYQDKIRLKVNSSSDNGTQYLKDLIEQETKELQNIRDRYEEKLSEVRSRLKEIDGRLKSTKNEMRKTNFRMTELKMNVGKVVDTGILNSKINERKNQEQAIASYEAAKEELGLKIEQIAQEAQPIKEQYDSTKLALVEAQDELQQLKEDINSRQSKIQKYKDDTIYYEDKKKVYLENIKKIEVNVAALKEGIQRQIQNACAFCSKERIENVDLPDTQEEIKRELDKVSRMIQKAEKSLGLSQEEVIALFEKCRNKYKEGQKKYMEIDEALNRLHNSLKARDQNYKNAEKGTCFDADMDFRASLKVRKFSGNLSFIKDTKSLEIYILTTNDEKARNVDTLSGGEKSFSQMALLLATWKPMRSRIIALDEFDVFMDQVNRKIGTTLIVKKLKDIARTQTIIITPQDIGKIADIDSSGVSIHRMRDPERQNNSNFYN.

The interval 26–64 is disordered; sequence QENEEQQQQRKRRRHQFAPMTQFNSNTLDEDSGFRSSSD. The Nuclear localization signal signature appears at 35-39; the sequence is RKRRR. 109-116 contacts ATP; the sequence is GNNGSGKS. A coiled-coil region spans residues 259-529; sequence ASAIHDSAQE…TIEQRKNEFE (271 aa). A flexible hinge region spans residues 530-695; sequence TPAIGPLGSL…IRLKVNSSSD (166 aa). The stretch at 696 to 969 forms a coiled coil; that stretch reads NGTQYLKDLI…RDQNYKNAEK (274 aa).

It belongs to the SMC family. SMC6 subfamily. In terms of assembly, component of the Smc5-Smc6 complex which consists of KRE29, MMS21, NSE1, NSE3, NSE4, NSE5, SMC5 and SMC6.

The protein localises to the nucleus. It localises to the chromosome. Functionally, acts in a DNA repair pathway for removal of UV-induced DNA damage that is distinct from classical nucleotide excision repair and in repair of ionizing radiation damage. Functions in homologous recombination repair of DNA double strand breaks and in recovery of stalled replication forks. Probably plays a role in structure. The protein is Structural maintenance of chromosomes protein 6 (SMC6) of Saccharomyces cerevisiae (strain ATCC 204508 / S288c) (Baker's yeast).